Reading from the N-terminus, the 267-residue chain is Ribosomal RNA small subunit methyltransferase J (267 aa).

S-adenosyl-L-methionine contacts are provided by residues 133–134 (ER) and aspartate 187.

The protein belongs to the methyltransferase superfamily. RsmJ family.

The protein localises to the cytoplasm. It carries out the reaction guanosine(1516) in 16S rRNA + S-adenosyl-L-methionine = N(2)-methylguanosine(1516) in 16S rRNA + S-adenosyl-L-homocysteine + H(+). Specifically methylates the guanosine in position 1516 of 16S rRNA. The chain is Ribosomal RNA small subunit methyltransferase J from Halorhodospira halophila (strain DSM 244 / SL1) (Ectothiorhodospira halophila (strain DSM 244 / SL1)).